The primary structure comprises 371 residues: Probable F-box protein At1g65740 (371 aa).

The F-box domain maps to Val2–Arg49.

This chain is Probable F-box protein At1g65740, found in Arabidopsis thaliana (Mouse-ear cress).